Reading from the N-terminus, the 74-residue chain is Serine protease inhibitor Kazal-type 7 (74 aa).

Positions 1–17 are cleaved as a signal peptide; that stretch reads MKLLGGLLLLFTATCLC. The Kazal-like domain occupies 18 to 74; it reads NVDCDIYKKYPVVAIPCPIENIPVCGSDYITYGNKCKLCTEILRSNGKIQFLHEGHC. 3 disulfides stabilise this stretch: Cys-21-Cys-56, Cys-34-Cys-53, and Cys-42-Cys-74.

It localises to the secreted. In terms of biological role, probable serine protease inhibitor. The protein is Serine protease inhibitor Kazal-type 7 (Spink7) of Rattus norvegicus (Rat).